The following is a 391-amino-acid chain: 3-ketoacyl-CoA thiolase (391 aa).

The active-site Acyl-thioester intermediate is the C95. Active-site proton acceptor residues include H347 and C377.

It belongs to the thiolase-like superfamily. Thiolase family. As to quaternary structure, heterotetramer of two alpha chains (FadB) and two beta chains (FadA).

It localises to the cytoplasm. The enzyme catalyses an acyl-CoA + acetyl-CoA = a 3-oxoacyl-CoA + CoA. It functions in the pathway lipid metabolism; fatty acid beta-oxidation. Catalyzes the final step of fatty acid oxidation in which acetyl-CoA is released and the CoA ester of a fatty acid two carbons shorter is formed. The chain is 3-ketoacyl-CoA thiolase from Alcanivorax borkumensis (strain ATCC 700651 / DSM 11573 / NCIMB 13689 / SK2).